Here is a 1103-residue protein sequence, read N- to C-terminus: PALM2-AKAP2 fusion protein (1103 aa).

2 disordered regions span residues 178-197 (ESAS…KKPP) and 304-396 (YNGT…SSRD). The span at 179–189 (SASNATETSGP) shows a compositional bias: polar residues. 3 positions are modified to phosphoserine: serine 322, serine 352, and serine 383. The span at 380–392 (VPVSPSSTTSSRC) shows a compositional bias: low complexity. A Glycyl lysine isopeptide (Lys-Gly) (interchain with G-Cter in SUMO1); alternate cross-link involves residue lysine 405. Lysine 405 is covalently cross-linked (Glycyl lysine isopeptide (Lys-Gly) (interchain with G-Cter in SUMO2); alternate). Positions 444–521 (EEMLELEKER…QKQLQQQQQQ (78 aa)) form a coiled coil. Disordered stretches follow at residues 483-544 (EQLD…DKAK) and 566-662 (NSRQ…SKLW). Over residues 490–505 (LESHKKYKERKERRAQ) the composition is skewed to basic and acidic residues. Residues 506-521 (QEQLLLQKQLQQQQQQ) are compositionally biased toward low complexity. Residues 522 to 531 (PPSQLCTAPA) are compositionally biased toward polar residues. The segment covering 533-544 (SHERASMIDKAK) has biased composition (basic and acidic residues). The segment covering 566-579 (NSRQAVAKGQSTPR) has biased composition (polar residues). Phosphoserine occurs at positions 567 and 624. Positions 633–643 (AAGSQGNTASQ) are enriched in polar residues. Phosphoserine is present on residues serine 692, serine 696, and serine 748. Residues 745–763 (QENSLADFSLPQTPQTDNP) show a composition bias toward polar residues. Positions 745-794 (QENSLADFSLPQTPQTDNPSEGRGEGVSKSFSDHGFYSPSSTLGDSPLVD) are disordered. A Phosphothreonine modification is found at threonine 757. Residues 797-810 (LEYQAGLLVQNAIQ) form a PKA-RII subunit binding domain region. The segment covering 817-829 (VDKAVSKTSRDGA) has biased composition (basic and acidic residues). The interval 817–907 (VDKAVSKTSR…GPINMEETRP (91 aa)) is disordered. Residue serine 862 is modified to Phosphoserine. A compositionally biased stretch (basic and acidic residues) spans 865-886 (QEKRDVLPKILPAEDRALRERG). Residues 941-979 (KLRSRKQRTLSMIEEEIRAAQEREEELKRQRQVLQSTQS) adopt a coiled-coil conformation. Residues serine 951, serine 979, serine 1009, and serine 1016 each carry the phosphoserine modification. Residues 962–1035 (EREEELKRQR…AAGTQRPKNL (74 aa)) form a disordered region. Over residues 976–990 (STQSPRTKNAPSLPS) the composition is skewed to polar residues.

Expressed in infantile heart and muscle, and fibroblasts.

It is found in the apical cell membrane. Functionally, binds to regulatory subunit (RII) of protein kinase A. May be involved in establishing polarity in signaling systems or in integrating PKA-RII isoforms with downstream effectors to capture, amplify and focus diffuse, trans-cellular signals carried by cAMP. Binds to and modulates the structure of the actin cytoskeleton. The polypeptide is PALM2-AKAP2 fusion protein (Homo sapiens (Human)).